A 290-amino-acid chain; its full sequence is Glutamate racemase (290 aa).

Residues 24-25 (DS) and 56-57 (YG) contribute to the substrate site. Cys87 serves as the catalytic Proton donor/acceptor. 88 to 89 (NT) provides a ligand contact to substrate. Catalysis depends on Cys199, which acts as the Proton donor/acceptor. Substrate is bound at residue 200–201 (TH). The segment at 271–290 (GADGASLPDPPSPRIELTTT) is disordered.

The protein belongs to the aspartate/glutamate racemases family.

It carries out the reaction L-glutamate = D-glutamate. The protein operates within cell wall biogenesis; peptidoglycan biosynthesis. Provides the (R)-glutamate required for cell wall biosynthesis. In Deinococcus radiodurans (strain ATCC 13939 / DSM 20539 / JCM 16871 / CCUG 27074 / LMG 4051 / NBRC 15346 / NCIMB 9279 / VKM B-1422 / R1), this protein is Glutamate racemase.